A 245-amino-acid chain; its full sequence is Tetraspanin-6 (245 aa).

At 1-19 (MASPSRRLQTKPVITCFKS) the chain is on the cytoplasmic side. Residues 20-40 (VLLIYTFIFWITGVILLAVGI) form a helical membrane-spanning segment. Residues 41-59 (WGKVSLENYFSLLNEKATN) are Extracellular-facing. Residues 60–80 (VPFVLIATGTVIILLGTFGCF) traverse the membrane as a helical segment. Over 81–93 (ATCRASAWMLKLY) the chain is Cytoplasmic. Residues 94-114 (AMFLTLIFLVELVAAIVGFVF) traverse the membrane as a helical segment. Residues 115–208 (RHEIKNSFKN…IKVMTIIESE (94 aa)) lie on the Extracellular side of the membrane. An N-linked (GlcNAc...) asparagine glycan is attached at N134. Residues 209 to 229 (MGVVAGISFGVACFQLIGIFL) form a helical membrane-spanning segment. Residues 230–245 (AYCLSRAITNNQYEIV) are Cytoplasmic-facing.

It belongs to the tetraspanin (TM4SF) family.

It is found in the membrane. This chain is Tetraspanin-6 (TSPAN6), found in Pongo abelii (Sumatran orangutan).